We begin with the raw amino-acid sequence, 208 residues long: Outer-membrane lipoprotein carrier protein (208 aa).

The N-terminal stretch at 1-21 (MRLIRTLFVAALAMGASLAHA) is a signal peptide.

This sequence belongs to the LolA family. In terms of assembly, monomer.

It localises to the periplasm. Functionally, participates in the translocation of lipoproteins from the inner membrane to the outer membrane. Only forms a complex with a lipoprotein if the residue after the N-terminal Cys is not an aspartate (The Asp acts as a targeting signal to indicate that the lipoprotein should stay in the inner membrane). The protein is Outer-membrane lipoprotein carrier protein of Pseudomonas aeruginosa (strain UCBPP-PA14).